A 151-amino-acid polypeptide reads, in one-letter code: UPF0756 membrane protein Dred_1097 (151 aa).

The next 4 helical transmembrane spans lie at 6-26, 52-72, 75-95, and 111-131; these read IILLSLILMGYLAESALLATA, VGLIFLMLSVLVPLAHDNIVY, LVMKTLSPQGLLALIGGTLAT, and LIFGMVIGSLIGIVFLGGIPI.

Belongs to the UPF0756 family.

Its subcellular location is the cell membrane. The polypeptide is UPF0756 membrane protein Dred_1097 (Desulforamulus reducens (strain ATCC BAA-1160 / DSM 100696 / MI-1) (Desulfotomaculum reducens)).